The following is a 674-amino-acid chain: DNA mismatch repair protein MutL (674 aa).

It belongs to the DNA mismatch repair MutL/HexB family.

This protein is involved in the repair of mismatches in DNA. It is required for dam-dependent methyl-directed DNA mismatch repair. May act as a 'molecular matchmaker', a protein that promotes the formation of a stable complex between two or more DNA-binding proteins in an ATP-dependent manner without itself being part of a final effector complex. The protein is DNA mismatch repair protein MutL of Clostridium perfringens (strain 13 / Type A).